The chain runs to 459 residues: V-type ATP synthase beta chain (459 aa).

The protein belongs to the ATPase alpha/beta chains family.

In terms of biological role, produces ATP from ADP in the presence of a proton gradient across the membrane. The V-type beta chain is a regulatory subunit. The chain is V-type ATP synthase beta chain from Thermoanaerobacter sp. (strain X514).